A 296-amino-acid polypeptide reads, in one-letter code: NmrA-like family domain-containing protein 1 (296 aa).

Residues 11-16, 37-41, 58-59, 79-81, Lys133, and 155-158 each bind NADP(+); these read GATGAQ, RSPGR, DQ, TNF, and YYEN.

The protein belongs to the NmrA-type oxidoreductase family. In terms of assembly, homodimer.

It is found in the cytoplasm. Its subcellular location is the perinuclear region. It localises to the nucleus. In terms of biological role, redox sensor protein. Undergoes restructuring and subcellular redistribution in response to changes in intracellular NADPH/NADP(+) levels. This is NmrA-like family domain-containing protein 1 (NMRAL1) from Gallus gallus (Chicken).